A 364-amino-acid polypeptide reads, in one-letter code: Peptide chain release factor 1 (364 aa).

Gln237 bears the N5-methylglutamine mark.

The protein belongs to the prokaryotic/mitochondrial release factor family. Post-translationally, methylated by PrmC. Methylation increases the termination efficiency of RF1.

Its subcellular location is the cytoplasm. Its function is as follows. Peptide chain release factor 1 directs the termination of translation in response to the peptide chain termination codons UAG and UAA. The chain is Peptide chain release factor 1 from Rubrobacter xylanophilus (strain DSM 9941 / JCM 11954 / NBRC 16129 / PRD-1).